The chain runs to 314 residues: tRNA pseudouridine synthase B (314 aa).

Aspartate 47 functions as the Nucleophile in the catalytic mechanism.

It belongs to the pseudouridine synthase TruB family. Type 1 subfamily.

It catalyses the reaction uridine(55) in tRNA = pseudouridine(55) in tRNA. Functionally, responsible for synthesis of pseudouridine from uracil-55 in the psi GC loop of transfer RNAs. This is tRNA pseudouridine synthase B from Vibrio campbellii (strain ATCC BAA-1116).